A 200-amino-acid polypeptide reads, in one-letter code: uncharacterized protein (200 aa).

The first 24 residues, 1–24 (MSRVFSCVLRACVCAGLCCWVCMG), serve as a signal peptide directing secretion. Residues 124–200 (GGRDLPMHGA…GEGGDNGEGE (77 aa)) are disordered. Acidic residues predominate over residues 184–200 (LGDEGETGEGGDNGEGE).

This is an uncharacterized protein from Homo sapiens (Human).